A 295-amino-acid chain; its full sequence is 4-diphosphocytidyl-2-C-methyl-D-erythritol kinase (295 aa).

K15 is a catalytic residue. 102-112 (PIASGVGGGSS) serves as a coordination point for ATP. D144 is a catalytic residue.

This sequence belongs to the GHMP kinase family. IspE subfamily.

It catalyses the reaction 4-CDP-2-C-methyl-D-erythritol + ATP = 4-CDP-2-C-methyl-D-erythritol 2-phosphate + ADP + H(+). It functions in the pathway isoprenoid biosynthesis; isopentenyl diphosphate biosynthesis via DXP pathway; isopentenyl diphosphate from 1-deoxy-D-xylulose 5-phosphate: step 3/6. In terms of biological role, catalyzes the phosphorylation of the position 2 hydroxy group of 4-diphosphocytidyl-2C-methyl-D-erythritol. This is 4-diphosphocytidyl-2-C-methyl-D-erythritol kinase from Mesorhizobium japonicum (strain LMG 29417 / CECT 9101 / MAFF 303099) (Mesorhizobium loti (strain MAFF 303099)).